The sequence spans 579 residues: Probable zinc metalloprotease EGY1, chloroplastic (579 aa).

Disordered stretches follow at residues 1 to 42 and 78 to 146; these read MAAA…PASA and GGGG…NEPP. The N-terminal 44 residues, 1–44, are a transit peptide targeting the chloroplast; that stretch reads MAAAAAALASSPMVHLTASRLRLPRPARSPAAATPSPSPASAAC. The span at 16-42 shows a compositional bias: low complexity; sequence LTASRLRLPRPARSPAAATPSPSPASA. Residues 78 to 92 are compositionally biased toward gly residues; the sequence is GGGGGGGGGGGGTGG. Low complexity-rich tracts occupy residues 104-115 and 125-137; these read AAAAEAKVGGAV and SGSF…SSSG. Helical transmembrane passes span 272–292, 321–341, 357–377, 392–412, 419–439, 452–472, 505–525, and 547–567; these read YVIS…LGIA, LLPF…IQLF, LSIP…ITQF, MAGP…GLLL, ASDL…LGLV, ATVA…TTAF, LLGL…YVLI, and AALI…WDEL.

This sequence belongs to the peptidase M50B family.

The protein localises to the plastid. The protein resides in the chloroplast membrane. Functionally, probable membrane-associated metalloprotease that may be involved in chloroplast development. The sequence is that of Probable zinc metalloprotease EGY1, chloroplastic (EGY1) from Oryza sativa subsp. japonica (Rice).